The following is a 475-amino-acid chain: MPKVLHRRKRASATDLYRTCKVSGTCPSDVIPKVEGNTLADKILKWASLGVFFGGLGIGTASGTGGRTGYIPIGGRPPSVVDIGPVSRPPVVIEPVGATDPSIVTLVEDSSIIEAGAVHPNFTGSSGFEVTTSSTATPAVLDISPTGTTVQVSSTNFLNPAYTEPSIIDPPQTGELSGHVLTSTPTAGSHSYEEIPMVTFASNAGTGSEPISSTPLPGVRRVAGPRLGLYTKATQQVPVADPAFVSRPASFATFDNPIYDPEETIIFEHPSIYTPPDPDFLDIVTLHRPALTSRQGTVRLSRVGQRASLRTRSGKRIGARVHFYHDISPIPSTTTGDIELQPLLPSGSSSADTLYDVYADDQHLDAVLQSVPSMSSRPLVPSNATISATSVASSHTNVTVPLSTGLSVPASTGPDVELPQFSVPVSVLTPSFPATTPYSIYIVGSDYYLFPSYIFFPKKHKRLHYFFTDGYVAAW.

Positions 1–11 (MPKVLHRRKRA) match the Nuclear localization signal motif. C20 and C26 form a disulfide bridge. Positions 455–463 (FFPKKHKRL) match the Nuclear localization signal motif.

It belongs to the papillomaviridae L2 protein family. As to quaternary structure, interacts with major capsid protein L1. Interacts with E2; this interaction inhibits E2 transcriptional activity but not the DNA replication function E2. Interacts with host GADD45GIP1. Interacts with host HSPA8; this interaction is required for L2 nuclear translocation. Interacts with host importins KPNB2 and KPNB3. Forms a complex with importin alpha2-beta1 heterodimers via interaction with the importin alpha2 adapter. Interacts with host DYNLT1; this interaction is essential for virus intracellular transport during entry. Interacts (via C-terminus) with host retromer subunits VPS35 and VPS29. In terms of processing, highly phosphorylated.

It localises to the virion. The protein localises to the host nucleus. The protein resides in the host early endosome. Its subcellular location is the host Golgi apparatus. Functionally, minor protein of the capsid that localizes along the inner surface of the virion, within the central cavities beneath the L1 pentamers. Plays a role in capsid stabilization through interaction with the major capsid protein L1. Once the virion enters the host cell, L2 escorts the genomic DNA into the nucleus by promoting escape from the endosomal compartments and traffic through the host Golgi network. Mechanistically, the C-terminus of L2 possesses a cell-penetrating peptide that protudes from the host endosome, interacts with host cytoplasmic retromer cargo and thereby mediates the capsid delivery to the host trans-Golgi network. Plays a role through its interaction with host dynein in the intracellular microtubule-dependent transport of viral capsid toward the nucleus. Mediates the viral genome import into the nucleus through binding to host importins. Once within the nucleus, L2 localizes viral genomes to host PML bodies in order to activate early gene expression for establishment of infection. Later on, promotes late gene expression by interacting with the viral E2 protein and by inhibiting its transcriptional activation functions. During virion assembly, encapsidates the genome by direct interaction with the viral DNA. This is Minor capsid protein L2 from Homo sapiens (Human).